We begin with the raw amino-acid sequence, 297 residues long: MSGNGVHGVHGALQLLRSLPKVSLANLRPNPGSKKPERRRGRGRYRGRKCGRGHKGERQRGNRPRLGFEGGQTPFYLSIPKYGFNEGHSCRRKYHPLSLQKLQYLIDLGRVDPTQPIDLTQLTNARGVTVQPLKRDYGVQLVEEGADIFAAKINIEVQRASELAIAAIEKNGGVVTASFYDPRSLEILIRPVPFFLRGQPIPKRMLPPEDLVRYYTDASNRGYLADPSKVAEARLELAKKYGYTLPDITKDELFKMLSTRKDPRQIFFGLAPGWIVNMADKKILKPTDERLLKYYSS.

The N-terminal 21 residues, 1–21, are a transit peptide targeting the mitochondrion; it reads MSGNGVHGVHGALQLLRSLPK. Positions 23-69 are disordered; that stretch reads SLANLRPNPGSKKPERRRGRGRYRGRKCGRGHKGERQRGNRPRLGFE. The span at 36–53 shows a compositional bias: basic residues; it reads PERRRGRGRYRGRKCGRG.

Belongs to the universal ribosomal protein uL15 family. Component of the mitochondrial ribosome large subunit (39S) which comprises a 16S rRNA and about 50 distinct proteins.

The protein localises to the mitochondrion. In Gallus gallus (Chicken), this protein is Large ribosomal subunit protein uL15m (MRPL15).